A 485-amino-acid chain; its full sequence is Iroquois-class homeodomain protein IRX-4 (485 aa).

Residues 142–203 constitute a DNA-binding region (homeobox; TALE-type); that stretch reads GTRRKNATRE…NARRRLKKEN (62 aa). A disordered region spans residues 206–313; that stretch reads TWPPRNKCSD…EEEEAAERAR (108 aa). Over residues 221 to 232 the composition is skewed to acidic residues; sequence EEEEEEEEECSQ. Over residues 234 to 253 the composition is skewed to basic and acidic residues; that stretch reads DAMKSEKAEEPTGKEEKELE. A compositionally biased stretch (acidic residues) spans 254–269; sequence LSDLEDLDAAESESSE. The segment covering 282–294 has biased composition (pro residues); it reads HPLPGGGPPPRAA.

Belongs to the TALE/IRO homeobox family. As to expression, ventricles of the heart, developing feather buds, retina, hindbrain.

It is found in the nucleus. In terms of biological role, regulates the chamber-specific expression of myosin isoforms by activating the expression of the ventricle myosin heavy chain-1 (Vmhc1) and suppressing the expression of the atrial myosin heavy chain-1 (Amhc1) in the ventricles. May play a critical role in establishing chamber-specific gene expression in the developing heart. The protein is Iroquois-class homeodomain protein IRX-4 (IRX4) of Gallus gallus (Chicken).